A 51-amino-acid polypeptide reads, in one-letter code: uncharacterized protein (51 aa).

This is an uncharacterized protein from Enterobacteria phage T4 (Bacteriophage T4).